The chain runs to 577 residues: Isocitrate dehydrogenase kinase/phosphatase (577 aa).

ATP-binding positions include 318 to 324 (APGVRGM) and K339. The active site involves D374.

The protein belongs to the AceK family.

The protein localises to the cytoplasm. It carries out the reaction L-seryl-[isocitrate dehydrogenase] + ATP = O-phospho-L-seryl-[isocitrate dehydrogenase] + ADP + H(+). Bifunctional enzyme which can phosphorylate or dephosphorylate isocitrate dehydrogenase (IDH) on a specific serine residue. This is a regulatory mechanism which enables bacteria to bypass the Krebs cycle via the glyoxylate shunt in response to the source of carbon. When bacteria are grown on glucose, IDH is fully active and unphosphorylated, but when grown on acetate or ethanol, the activity of IDH declines drastically concomitant with its phosphorylation. The sequence is that of Isocitrate dehydrogenase kinase/phosphatase from Pseudomonas aeruginosa (strain LESB58).